The sequence spans 118 residues: Large ribosomal subunit protein bL17 (118 aa).

The protein belongs to the bacterial ribosomal protein bL17 family. In terms of assembly, part of the 50S ribosomal subunit. Contacts protein L32.

The sequence is that of Large ribosomal subunit protein bL17 from Campylobacter fetus subsp. fetus (strain 82-40).